The primary structure comprises 694 residues: NADPH--cytochrome P450 reductase (694 aa).

Topologically, residues 1-8 (MAQLDTLD) are lumenal. Residues 9–31 (LVVLAVLLVGSVAYFTKGTYWAV) traverse the membrane as a helical segment. Topologically, residues 32–694 (AKDPYASTGP…RGRYQEDVWS (663 aa)) are cytoplasmic. The Flavodoxin-like domain occupies 66–220 (CVIFYGSQTG…DFLAWKEPMW (155 aa)). FMN is bound by residues 72–77 (SQTGTA), 123–126 (ATYG), 168–177 (LGNNTYEHYN), and Asp-203. Residues 276 to 537 (HNPFIAPIAE…HVRHSNFKLP (262 aa)) form the FAD-binding FR-type domain. Arg-295 lines the NADP(+) pocket. FAD-binding positions include 450–453 (RYYS), 468–470 (TAV), and 485–488 (GVTT). NADP(+)-binding positions include Thr-551, 613–614 (SR), 619–623 (KVYVQ), and Glu-655. An FAD-binding site is contributed by Trp-693.

Belongs to the NADPH--cytochrome P450 reductase family. This sequence in the N-terminal section; belongs to the flavodoxin family. The protein in the C-terminal section; belongs to the flavoprotein pyridine nucleotide cytochrome reductase family. Requires FAD as cofactor. FMN serves as cofactor.

It is found in the endoplasmic reticulum membrane. It localises to the mitochondrion outer membrane. The protein localises to the cell membrane. The enzyme catalyses 2 oxidized [cytochrome P450] + NADPH = 2 reduced [cytochrome P450] + NADP(+) + H(+). Its function is as follows. This enzyme is required for electron transfer from NADP to cytochrome P450 in microsomes. It can also provide electron transfer to heme oxygenase and cytochrome B5. Involved in ergosterol biosynthesis. The chain is NADPH--cytochrome P450 reductase from Aspergillus niger.